A 511-amino-acid polypeptide reads, in one-letter code: Zinc finger CCCH-type with G patch domain-containing protein (511 aa).

An N-acetylmethionine modification is found at Met-1. Ser-70 is modified (phosphoserine). The interval Pro-92–Ser-129 is disordered. Positions Asp-98–Ala-115 are enriched in polar residues. Residues Leu-116–Glu-127 are compositionally biased toward acidic residues. Residues Lys-174–Val-200 form a C3H1-type zinc finger. A disordered region spans residues Pro-266–Val-291. Ser-276 carries the phosphoserine modification. A Phosphothreonine modification is found at Thr-280. One can recognise a G-patch domain in the interval Thr-313 to Glu-359. Position 353 is a phosphoserine (Ser-353). Disordered regions lie at residues Lys-363–Asn-393 and Ala-490–Phe-511. Positions Gln-491–Phe-511 are enriched in basic and acidic residues.

Interacts with CHD4/Mi-2; the interaction is direct.

It is found in the nucleus. In terms of biological role, transcription repressor that specifically binds the 5'-GGAG[GA]A[GA]A-3' consensus sequence. Represses transcription by recruiting the chromatin multiprotein complex NuRD to target promoters. Negatively regulates expression of EGFR, a gene involved in cell proliferation, survival and migration. Its ability to repress genes of the EGFR pathway suggest it may act as a tumor suppressor. The sequence is that of Zinc finger CCCH-type with G patch domain-containing protein (Zgpat) from Mus musculus (Mouse).